The primary structure comprises 506 residues: Anaerobic nitric oxide reductase transcription regulator NorR (506 aa).

Asp-57 is subject to 4-aspartylphosphate. Residues 187-416 form the Sigma-54 factor interaction domain; sequence MIGLSPAMTQ…LEHAIHRAVV (230 aa). ATP is bound by residues 215–222 and 278–287; these read GETGTGKE and ADNGTLFLDE. Positions 481–500 form a DNA-binding region, H-T-H motif; that stretch reads WAASARALETDVANLHRLAK.

It participates in nitrogen metabolism; nitric oxide reduction. Functionally, required for the expression of anaerobic nitric oxide (NO) reductase, acts as a transcriptional activator for at least the norVW operon. Activation also requires sigma-54. The sequence is that of Anaerobic nitric oxide reductase transcription regulator NorR from Salmonella paratyphi C (strain RKS4594).